Reading from the N-terminus, the 479-residue chain is Phosphoglycerate kinase, glycosomal (479 aa).

(2R)-3-phosphoglycerate-binding residues include Val-23, Asp-24, Phe-25, Asn-26, Arg-39, Ser-61, His-62, Gly-64, Arg-65, Arg-132, His-168, and Arg-169. The ADP site is built by Gly-214 and Ala-215. Residue Gly-214 coordinates CDP. AMP is bound by residues Ala-215 and Lys-216. Residue Ala-215 coordinates ATP. Mg(2+) is bound at residue Ala-215. Lys-216 is a binding site for (2R)-3-phosphoglycerate. Asp-219 serves as a coordination point for CDP. Asp-219 lines the Mg(2+) pocket. ADP-binding residues include Lys-220 and Gly-238. Lys-220 contacts AMP. ATP is bound at residue Lys-220. CDP is bound at residue Gly-238. AMP contacts are provided by Ala-239 and Ala-311. The ATP site is built by Ala-239 and Ala-311. The ADP site is built by Ala-311 and Asn-335. Residues Gly-336 and Phe-341 each contribute to the CDP site. The ADP site is built by Phe-341, Glu-342, Asp-374, and Thr-375. Residue Glu-342 coordinates AMP. Residues Glu-342, Asp-374, and Thr-375 each coordinate ATP. Asp-374 provides a ligand contact to Mg(2+).

The protein belongs to the phosphoglycerate kinase family. Monomer. Requires Mg(2+) as cofactor.

Its subcellular location is the glycosome. It carries out the reaction (2R)-3-phosphoglycerate + ATP = (2R)-3-phospho-glyceroyl phosphate + ADP. Its pathway is carbohydrate degradation; glycolysis; pyruvate from D-glyceraldehyde 3-phosphate: step 2/5. The sequence is that of Phosphoglycerate kinase, glycosomal (PGKC) from Leishmania mexicana.